The chain runs to 353 residues: Suppressor of RNA-mediated gene silencing (353 aa).

Belongs to the phytoreovirus non-structural protein 10 family.

Its function is as follows. Suppressor of RNA-mediated gene silencing, also known as post-transcriptional gene silencing (PTGS), a mechanism of plant viral defense that limits the accumulation of viral RNAs. This chain is Suppressor of RNA-mediated gene silencing, found in Rice dwarf virus (isolate Fujian) (RDV).